We begin with the raw amino-acid sequence, 459 residues long: Protein BTN1 (459 aa).

11 helical membrane-spanning segments follow: residues 37–57, 73–93, 102–122, 129–149, 167–187, 189–209, 240–260, 283–303, 325–342, 352–372, and 374–394; these read VSVV…YVLV, AVLL…PYFI, IAVF…APVE, LLGV…FLGL, GAGL…GLGV, GSLL…WGIL, VPAG…AATA, ALFF…YTIN, YYPF…ISRS, LYLP…HAVL, and FIPS…LGGA.

Belongs to the battenin family.

The protein resides in the vacuole membrane. Functionally, involved in vacuolar transport and vacuole pH homeostasis. Also required for cytokinesis. The sequence is that of Protein BTN1 (BTN1) from Chaetomium globosum (strain ATCC 6205 / CBS 148.51 / DSM 1962 / NBRC 6347 / NRRL 1970) (Soil fungus).